The following is a 638-amino-acid chain: Pentatricopeptide repeat-containing protein At1g59720, chloroplastic/mitochondrial (638 aa).

Residues 1 to 40 (MVVRSIIVSPPTTITYYHPMSIGLLVHPLSPHIPPASSPS) constitute a chloroplast and mitochondrion transit peptide. PPR repeat units lie at residues 82 to 112 (TLFL…IENH), 113 to 148 (SSFM…GESS), 150 to 184 (DKHT…GFGG), 185 to 215 (DVYV…MPER), 216 to 246 (SLVS…MQRS), 250 to 280 (DGYT…LLRK), 288 to 318 (DVLV…MQKR), 319 to 353 (DLAS…RENV), 356 to 390 (NSVT…YCIE), and 392 to 422 (ALEH…MPMK). The type E motif stretch occupies residues 427–510 (IWRSLLDACC…EPGCSSIEIN (84 aa)). Positions 511–541 (GISHEFFAGDTSHPQTKQIYQQLKVIDDRLR) are type E(+) motif. The segment at 542–638 (SIGYLPDRSQ…DGSCSCLDYW (97 aa)) is type DYW motif.

Belongs to the PPR family. PCMP-H subfamily. In terms of assembly, interacts with ORRM1. Interacts with VAR3/OZ1.

The protein localises to the plastid. It localises to the chloroplast. The protein resides in the mitochondrion. In terms of biological role, involved in multiple sites RNA editing events in chloroplasts. Involved in the editing of the site 2 of ndhB (ndhB-2) and site 3 of ndhD (ndhD-3) transcripts, which are two plastid-encoded subunits of the chloroplast NAD(P)H dehydrogenase (NDH) complex. Required for the activity of the NDH complex of the photosynthetic electron transport chain. This chain is Pentatricopeptide repeat-containing protein At1g59720, chloroplastic/mitochondrial (PCMP-H51), found in Arabidopsis thaliana (Mouse-ear cress).